A 1046-amino-acid chain; its full sequence is Arrestin-related trafficking adapter 3 (1046 aa).

A disordered region spans residues 115-141; it reads YPPTEQKSKKKMDASAPNESNNAANNF. Low complexity predominate over residues 128-140; sequence ASAPNESNNAANN. 2 positions are modified to phosphoserine: Ser155 and Ser162. 2 stretches are compositionally biased toward low complexity: residues 168 to 179 and 198 to 210; these read SGLSSLNLSPLG and RSSS…GPSR. The tract at residues 168–230 is disordered; the sequence is SGLSSLNLSP…ATSPSVSHHN (63 aa). 2 positions are modified to phosphoserine: Ser213 and Ser586. Over residues 605-614 the composition is skewed to polar residues; sequence TRNSRQFNRN. Disordered regions lie at residues 605 to 627 and 651 to 820; these read TRNS…IFNS and PLSP…FAHS. Low complexity predominate over residues 669–694; sequence FDFSSDFISDAASGTTTTEVSSSESS. The segment covering 734–785 has biased composition (basic and acidic residues); it reads KNSDKNSSETLNKKESMSKIEENKHKRETTPKKRENRDVKSLSTPQREESKD. A compositionally biased stretch (low complexity) spans 802-811; the sequence is LSLSSSLHSS. 2 positions are modified to phosphoserine: Ser826 and Ser838. Positions 868–889 are disordered; sequence NHDKNELNRHSTNTSSTPASAR. Residues 877 to 889 are compositionally biased toward polar residues; the sequence is HSTNTSSTPASAR. Ser900 carries the post-translational modification Phosphoserine. The segment at 986–1017 is disordered; it reads QNSAESDHNNDIFTQGSGLTESSKNSDSEERF. Polar residues predominate over residues 996-1008; sequence DIFTQGSGLTESS. Phosphoserine is present on residues Ser1022 and Ser1023.

It belongs to the ALY1 family. In terms of assembly, interacts with PCL6, PCL7 and RSP5. In terms of processing, ubiquitinated by RSP5. Post-translationally, phosphorylated by the cyclin-CDKs PCL6-PHO85 and PCL7-PHO85.

It is found in the cytoplasm. Functionally, may regulate endocytosis by recruiting RSP5 ubiquitin ligase activity to specific plasma membrane proteins in response to extracellular stimuli. This Saccharomyces cerevisiae (strain ATCC 204508 / S288c) (Baker's yeast) protein is Arrestin-related trafficking adapter 3 (ALY2).